We begin with the raw amino-acid sequence, 285 residues long: K88 fimbrial protein AD (285 aa).

An N-terminal signal peptide occupies residues 1-21; sequence MKKTLIALAIAASAASGMAHA.

It belongs to the fimbrial K88 protein family. K88 fimbria, 0.1-1 micrometer in length and 7 nanometers in diameter, is composed of about 100 identical subunits.

The protein localises to the fimbrium. K88 major fimbrial subunit. Fimbriae (also called pili), are polar filaments radiating from the surface of the bacterium to a length of 0.5-1.5 micrometers and numbering 100-300 per cell. They enable bacteria to colonize the epithelium of specific host organs. The polypeptide is K88 fimbrial protein AD (faeG) (Escherichia coli).